The sequence spans 511 residues: NAD(P)H-quinone oxidoreductase subunit 2, chloroplastic (511 aa).

14 helical membrane-spanning segments follow: residues 15–35, 39–59, 78–98, 108–128, 132–152, 167–187, 210–230, 244–264, 278–298, 306–326, 334–354, 377–397, 410–430, and 466–486; these read LLPEGIVTILLVFILLIDLTF, VLSWLLYIPLVGLVCSMVVLL, SLSIAFRFFILLSAVLCILLS, ALTEFFVLLLTAVIGGMLLSG, LIMIFLSLETLGLSSYLLTGY, LLIGAASSSILLYGLSLLYGL, FASWVALIFITVGIGFKVAAA, PTPVVAFLSVGSKAAGLALAT, WHLLFQVLASLSMILGNLIAI, MLGYSSVSQAGFLMIGLIAGN, LVYMLLYIFMNLGAFACIILF, VFCFSISLLSLGGIPPLAGFF, GFYILVFIGLFTSVISIYYYL, and LGIGLCVLGSVLAGVLVNPII.

It belongs to the complex I subunit 2 family. As to quaternary structure, NDH is composed of at least 16 different subunits, 5 of which are encoded in the nucleus.

The protein resides in the plastid. The protein localises to the chloroplast thylakoid membrane. The catalysed reaction is a plastoquinone + NADH + (n+1) H(+)(in) = a plastoquinol + NAD(+) + n H(+)(out). It carries out the reaction a plastoquinone + NADPH + (n+1) H(+)(in) = a plastoquinol + NADP(+) + n H(+)(out). NDH shuttles electrons from NAD(P)H:plastoquinone, via FMN and iron-sulfur (Fe-S) centers, to quinones in the photosynthetic chain and possibly in a chloroplast respiratory chain. The immediate electron acceptor for the enzyme in this species is believed to be plastoquinone. Couples the redox reaction to proton translocation, and thus conserves the redox energy in a proton gradient. The sequence is that of NAD(P)H-quinone oxidoreductase subunit 2, chloroplastic from Chlorokybus atmophyticus (Soil alga).